The chain runs to 383 residues: Dimethylsulfoniopropionate lyase 3 (383 aa).

It belongs to the aspartate/glutamate racemases family. ALMA1 subfamily. As to quaternary structure, homotetramer.

It carries out the reaction S,S-dimethyl-beta-propiothetin = acrylate + dimethyl sulfide + H(+). Mediates cleavage of dimethylsulfoniopropionate (DMSP) into dimethyl sulfide (DMS) and acrylate. DMS is the principal form by which sulfur is transported from oceans to the atmosphere and is a key component of the ocean sulfur cycle. This is Dimethylsulfoniopropionate lyase 3 from Emiliania huxleyi (strain CCMP1516).